Reading from the N-terminus, the 139-residue chain is Self-incompatibility protein S1 (139 aa).

The N-terminal stretch at 1–19 is a signal peptide; that stretch reads MNIFYVIVLLSFFLSKSSG. Residue N51 is glycosylated (N-linked (GlcNAc...) asparagine).

The protein belongs to the plant self-incompatibility (S1) protein family. In terms of processing, glycosylated (S1b) and unglocosylated (S1a) forms coexist. As to expression, accumulates in the stigma (at protein level).

Its subcellular location is the secreted. Functionally, exhibits specific pollen self-inhibitory activity thus preventing self-fertilization. The polypeptide is Self-incompatibility protein S1 (Papaver rhoeas (Common poppy)).